The following is a 157-amino-acid chain: MTKTVFVLNGPNLNLLGKREPGIYGVATLDDIEASCKREAGQLELQIDFRQSNHEGDLVSWIQEAGEKNAYVLINPAAYSHTSVAIHDAIRSARVTVVEVHLSNIHAREAFRHHSHVSAVTKGVICGFGAEGYLLGLRALAAIAKEEENNGQSIKGA.

Tyrosine 24 serves as the catalytic Proton acceptor. 3 residues coordinate substrate: asparagine 75, histidine 81, and aspartate 88. Histidine 101 (proton donor) is an active-site residue. Residues 102–103 (LS) and arginine 112 contribute to the substrate site.

This sequence belongs to the type-II 3-dehydroquinase family. In terms of assembly, homododecamer.

The enzyme catalyses 3-dehydroquinate = 3-dehydroshikimate + H2O. It participates in metabolic intermediate biosynthesis; chorismate biosynthesis; chorismate from D-erythrose 4-phosphate and phosphoenolpyruvate: step 3/7. Functionally, catalyzes a trans-dehydration via an enolate intermediate. The sequence is that of 3-dehydroquinate dehydratase from Brucella melitensis biotype 1 (strain ATCC 23456 / CCUG 17765 / NCTC 10094 / 16M).